The primary structure comprises 204 residues: Probable proteasome subunit beta type-3 (204 aa).

It belongs to the peptidase T1B family. The 26S proteasome consists of a 20S proteasome core and two 19S regulatory subunits. The 20S proteasome core is composed of 28 subunits that are arranged in four stacked rings, resulting in a barrel-shaped structure. The two end rings are each formed by seven alpha subunits, and the two central rings are each formed by seven beta subunits. The catalytic chamber with the active sites is on the inside of the barrel.

It is found in the cytoplasm. Its subcellular location is the nucleus. In terms of biological role, non-catalytic component of the proteasome, a multicatalytic proteinase complex which is characterized by its ability to cleave peptides with Arg, Phe, Tyr, Leu, and Glu adjacent to the leaving group at neutral or slightly basic pH. The proteasome has an ATP-dependent proteolytic activity. This is Probable proteasome subunit beta type-3 (pup3) from Schizosaccharomyces pombe (strain 972 / ATCC 24843) (Fission yeast).